A 227-amino-acid polypeptide reads, in one-letter code: UPF0758 protein CPF_2399 (227 aa).

In terms of domain architecture, MPN spans 105 to 227; that stretch reads KISKPSDVAK…FISLKEKDIL (123 aa). Zn(2+) contacts are provided by H176, H178, and D189. Residues 176–189 carry the JAMM motif motif; the sequence is HNHPSGDPTPSRDD.

Belongs to the UPF0758 family.

This Clostridium perfringens (strain ATCC 13124 / DSM 756 / JCM 1290 / NCIMB 6125 / NCTC 8237 / Type A) protein is UPF0758 protein CPF_2399.